Here is a 125-residue protein sequence, read N- to C-terminus: Protein ApaG (125 aa).

Residues 1–125 enclose the ApaG domain; sequence MINSPRVCIQ…FRLAVPTLIH (125 aa).

This chain is Protein ApaG, found in Escherichia coli (strain SE11).